The chain runs to 158 residues: Transcriptional repressor NrdR (158 aa).

Residues 1–22 (MRCPYCGSEDTQVKDSRPAEDN) form a disordered region. A zinc finger lies at 3–34 (CPYCGSEDTQVKDSRPAEDNTSIRRRRICPDC). A compositionally biased stretch (basic and acidic residues) spans 11 to 22 (TQVKDSRPAEDN). The region spanning 49-139 (LMVIKKTGRK…VYRDFSHAED (91 aa)) is the ATP-cone domain.

It belongs to the NrdR family. The cofactor is Zn(2+).

Its function is as follows. Negatively regulates transcription of bacterial ribonucleotide reductase nrd genes and operons by binding to NrdR-boxes. The polypeptide is Transcriptional repressor NrdR (Rhizobium rhizogenes (strain K84 / ATCC BAA-868) (Agrobacterium radiobacter)).